The primary structure comprises 112 residues: Protein new-glue 2 (112 aa).

The N-terminal stretch at 1-24 (MKITVVLVLLATFLGCVMIHESEA) is a signal peptide. Over residues 24 to 69 (ASTTTTSTSASATTTTSASATTTTSASATTTTSASATTTTASPSSS) the composition is skewed to low complexity. The tract at residues 24–112 (ASTTTTSTSA…RSSRNRRSEE (89 aa)) is disordered. Repeat copies occupy residues 31–38 (TSASATTT), 39–46 (TSASATTT), 47–54 (TSASATTT), and 55–62 (TSASATTT). The tract at residues 31 to 62 (TSASATTTTSASATTTTSASATTTTSASATTT) is 4 X 8 AA tandem repeats of T-S-A-S-A-T-T-T. Basic residues predominate over residues 70–112 (SKKKTVTHYKRKVKRPKKVRKITRRRGLRSRNGRSSRNRRSEE).

It to NG-1, also to SGS-3. As to expression, salivary gland specific.

It localises to the secreted. This is Protein new-glue 2 (ng2) from Drosophila melanogaster (Fruit fly).